Reading from the N-terminus, the 273-residue chain is MHDANIRVAIAGAGGRMGRQLIQAALALEGVQLGAALEREGSSLLGSDAGELAGAGKTGVTVQSSLDAVKDDFDVFIDFTRPEGTLNHLAFCRQHGKGMVIGTTGFDEAGKQAIRDAAADIAIVFAANFSVGVNVMLKLLEKAAKVMGDYTDIEIIEAHHRHKVDAPSGTALAMGEAIAHALDKDLKDCAVYSREGHTGERVPGTIGFATVRAGDIVGEHTAMFADIGERLEITHKASSRMTFANGAVRSALWLSGKESGLFDMRDVLDLNSL.

Residues 12–17 and glutamate 38 each bind NAD(+); that span reads GAGGRM. Arginine 39 provides a ligand contact to NADP(+). Residues 102–104 and 126–129 contribute to the NAD(+) site; these read GTT and AANF. The active-site Proton donor/acceptor is the histidine 159. Histidine 160 is a binding site for (S)-2,3,4,5-tetrahydrodipicolinate. The active-site Proton donor is the lysine 163. 169–170 contributes to the (S)-2,3,4,5-tetrahydrodipicolinate binding site; the sequence is GT.

This sequence belongs to the DapB family. Homotetramer.

It is found in the cytoplasm. The enzyme catalyses (S)-2,3,4,5-tetrahydrodipicolinate + NAD(+) + H2O = (2S,4S)-4-hydroxy-2,3,4,5-tetrahydrodipicolinate + NADH + H(+). It catalyses the reaction (S)-2,3,4,5-tetrahydrodipicolinate + NADP(+) + H2O = (2S,4S)-4-hydroxy-2,3,4,5-tetrahydrodipicolinate + NADPH + H(+). Its pathway is amino-acid biosynthesis; L-lysine biosynthesis via DAP pathway; (S)-tetrahydrodipicolinate from L-aspartate: step 4/4. Functionally, catalyzes the conversion of 4-hydroxy-tetrahydrodipicolinate (HTPA) to tetrahydrodipicolinate. In Escherichia coli O139:H28 (strain E24377A / ETEC), this protein is 4-hydroxy-tetrahydrodipicolinate reductase.